Consider the following 842-residue polypeptide: ATP-binding cassette sub-family B member 6 (842 aa).

The Lumenal segment spans residues 1 to 26 (MVTVGNYCEAEGPVGPAWMQDGLSPC). The interval 1–205 (MVTVGNYCEA…SGGLFVLGLW (205 aa)) is required for the lysosomal targeting. The interval 1–236 (MVTVGNYCEA…RSQVRSAAQQ (236 aa)) is required for ATPase activity. Asparagine 6 is a glycosylation site (N-linked (GlcNAc...) asparagine). Cysteine 8 and cysteine 26 form a disulfide bridge. Residues 27–47 (FFFTLVPSTRMALGTLALVLA) traverse the membrane as a helical segment. The Cytoplasmic segment spans residues 48 to 72 (LPCRRRERPAGADSLSWGAGPRISP). The chain crosses the membrane as a helical span at residues 73–93 (YVLQLLLATLQAALPLAGLAG). The Lumenal portion of the chain corresponds to 94–106 (RVGTARGAPLPSY). The helical transmembrane segment at 107–127 (LLLASVLESLAGACGLWLLVV) threads the bilayer. Residues 128–147 (ERSQARQRLAMGIWIKFRHS) are Cytoplasmic-facing. A helical membrane pass occupies residues 148-168 (PGLLLLWTVAFAAENLALVSW). The Lumenal segment spans residues 169–185 (NSPQWWWARADLGQQVQ). The chain crosses the membrane as a helical span at residues 186–206 (FSLWVLRYVVSGGLFVLGLWA). The Cytoplasmic portion of the chain corresponds to 207–263 (PGLRPQSYTLQVHEEDQDVERSQVRSAAQQSTWRDFGRKLRLLSGYLWPRGSPALQL). Residues 264 to 284 (VVLICLGLMGLERALNVLVPI) form a helical membrane-spanning segment. Residues 265–556 (VLICLGLMGL…FGTYYRMIQT (292 aa)) enclose the ABC transmembrane type-1 domain. At 285 to 291 (FYRNIVN) the chain is on the lumenal side. The helical transmembrane segment at 292–312 (LLTEKAPWNSLAWTVTSYVFL) threads the bilayer. Residues 313–375 (KFLQGGGTGS…TGEVLRIADR (63 aa)) are Cytoplasmic-facing. Residues 376-396 (GTSSVTGLLSYLVFNVIPTLA) form a helical membrane-spanning segment. Residue aspartate 397 is a topological domain, lumenal. Residues 398–418 (IIIGIIYFSMFFNAWFGLIVF) traverse the membrane as a helical segment. Residues 419 to 499 (LCMSLYLTLT…SSASLVLLNQ (81 aa)) are Cytoplasmic-facing. Residues 500–520 (TQNLVIGLGLLAGSLLCAYFV) form a helical membrane-spanning segment. Residues 521–529 (TEQKLQVGD) lie on the Lumenal side of the membrane. Residues 530 to 550 (YVLFGTYIIQLYMPLNWFGTY) form a helical membrane-spanning segment. The Cytoplasmic segment spans residues 551–842 (YRMIQTNFID…EDTKPQTMER (292 aa)). The ABC transporter domain occupies 590 to 824 (IEFENVHFSY…GGVYADMWQL (235 aa)). ATP contacts are provided by residues tyrosine 599 and 623–634 (GPSGAGKSTILR).

Belongs to the ABC transporter superfamily. ABCB family. Heavy Metal importer (TC 3.A.1.210) subfamily. In terms of assembly, homodimer. Post-translationally, N-glycosylated. Widely expressed. High expression is detected in the retinal epithelium. Expressed in mature erythrocytes.

The protein resides in the cell membrane. Its subcellular location is the mitochondrion outer membrane. It localises to the endoplasmic reticulum membrane. It is found in the golgi apparatus membrane. The protein localises to the endosome membrane. The protein resides in the lysosome membrane. Its subcellular location is the late endosome membrane. It localises to the early endosome membrane. It is found in the secreted. The protein localises to the extracellular exosome. The protein resides in the mitochondrion. Its subcellular location is the endosome. It localises to the multivesicular body membrane. It is found in the melanosome membrane. The catalysed reaction is heme b(in) + ATP + H2O = heme b(out) + ADP + phosphate + H(+). The enzyme catalyses coproporphyrin III(in) + ATP + H2O = coproporphyrin III(out) + ADP + phosphate + H(+). It catalyses the reaction pheophorbide a(in) + ATP + H2O = pheophorbide a(out) + ADP + phosphate + H(+). It carries out the reaction coproporphyrinogen III(in) + ATP + H2O = coproporphyrinogen III(out) + ADP + phosphate + H(+). The catalysed reaction is protoporphyrin IX(in) + ATP + H2O = protoporphyrin IX(out) + ADP + phosphate + H(+). The enzyme catalyses coproporphyrin I(in) + ATP + H2O = coproporphyrin I(out) + ADP + phosphate + H(+). It catalyses the reaction uroporphyrin I(in) + ATP + H2O = uroporphyrin I(out) + ADP + phosphate + H(+). It carries out the reaction uroporphyrin III(in) + ATP + H2O = uroporphyrin III(out) + ADP + phosphate + H(+). Its activity is regulated as follows. ATPase activity is inhibited by MgATP with an IC(50) of 1.03 mM and up-regulated by coporphyrin III&gt; hemin &gt; protoporphyrin IX. ATPase activity for hemin is up-regulated by glutathione. The ATPase activity is impaired by increasing copper concentrations (0-300 uM). The ATPase activity is stimulated in presence of glutathione for increasing copper concentrations (0-300 uM). In terms of biological role, ATP-dependent transporter that catalyzes the transport of a broad-spectrum of porphyrins from the cytoplasm to the extracellular space through the plasma membrane or into the vesicle lumen. May also function as an ATP-dependent importer of porphyrins from the cytoplasm into the mitochondria, in turn may participate in the de novo heme biosynthesis regulation and in the coordination of heme and iron homeostasis during phenylhydrazine stress. May also play a key role in the early steps of melanogenesis producing PMEL amyloid fibrils. In vitro, it confers to cells a resistance to toxic metal such as arsenic and cadmium and against chemotherapeutics agent such as 5-fluorouracil, SN-38 and vincristin. In addition may play a role in the transition metal homeostasis. This Homo sapiens (Human) protein is ATP-binding cassette sub-family B member 6.